Reading from the N-terminus, the 413-residue chain is Na(+)-translocating NADH-quinone reductase subunit B (413 aa).

3 helical membrane-spanning segments follow: residues 55 to 75 (IMIMVWFAVFPAMFWGMYNAG), 128 to 148 (FLPIYATVFIVGGFWEVLFCM), and 163 to 183 (ILFALIVPPTLPLWQAALGIT). Position 235 is an FMN phosphoryl threonine (T235). Helical transmembrane passes span 267–287 (IPGSIGEVSTLALMIGAAMIV), 296–316 (IIAGVMIGMIAVSTLFNVIGS), 324–344 (MPWHWHLVLGGFAFGMFFMAT), 357–377 (WWYGILIGAMCVMIRVVNPAY), and 380–400 (GMMLAILFANLFAPLFDHVVI).

It belongs to the NqrB/RnfD family. Composed of six subunits; NqrA, NqrB, NqrC, NqrD, NqrE and NqrF. The cofactor is FMN.

Its subcellular location is the cell inner membrane. It carries out the reaction a ubiquinone + n Na(+)(in) + NADH + H(+) = a ubiquinol + n Na(+)(out) + NAD(+). NQR complex catalyzes the reduction of ubiquinone-1 to ubiquinol by two successive reactions, coupled with the transport of Na(+) ions from the cytoplasm to the periplasm. NqrA to NqrE are probably involved in the second step, the conversion of ubisemiquinone to ubiquinol. The sequence is that of Na(+)-translocating NADH-quinone reductase subunit B from Vibrio campbellii (strain ATCC BAA-1116).